We begin with the raw amino-acid sequence, 402 residues long: N-acetyltransferase Eis (402 aa).

Residues 3–154 (VTLCSPTEDD…RFARFHADAP (152 aa)) form the N-acetyltransferase domain. Acetyl-CoA contacts are provided by residues 85-87 (VAV), 93-98 (RRGLLR), and 121-122 (SE). The active-site Proton donor is the tyrosine 126. The active-site Proton acceptor; via carboxylate is phenylalanine 402.

The protein belongs to the acetyltransferase Eis family. As to quaternary structure, homohexamer; trimer of dimers.

The protein resides in the secreted. Its subcellular location is the host cytoplasmic vesicle. The protein localises to the host phagosome. It localises to the extracellular vesicle. It is found in the bacterial extracellular vesicle. The protein resides in the host extracellular space. The enzyme catalyses L-lysyl-[protein] + acetyl-CoA = N(6)-acetyl-L-lysyl-[protein] + CoA + H(+). Effector that is released into the host cell and affects host immune responses. Acts as an acetyltransferase that acetylates lysine residues of host proteins. The protein is N-acetyltransferase Eis of Mycobacterium bovis (strain BCG / Pasteur 1173P2).